The primary structure comprises 421 residues: ATP-dependent RNA helicase RhlB (421 aa).

Residues 9 to 37 (THFADLPINEQVVKALSAANFSHCTPIQA) carry the Q motif motif. Residues 40 to 216 (LPPLLEGNDI…YEHMDNPTHV (177 aa)) enclose the Helicase ATP-binding domain. 53 to 60 (AQTGTGKT) is a binding site for ATP. The DEAD box motif lies at 162–165 (DEAD). The region spanning 240–387 (KMALLLSLME…VTEYQADALL (148 aa)) is the Helicase C-terminal domain. The disordered stretch occupies residues 389-421 (DVTPPKPRHKKRMQNGRNPQKRQSSGSRNRRKP). Over residues 403 to 415 (NGRNPQKRQSSGS) the composition is skewed to polar residues.

Belongs to the DEAD box helicase family. RhlB subfamily. In terms of assembly, component of the RNA degradosome, which is a multiprotein complex involved in RNA processing and mRNA degradation.

The protein localises to the cytoplasm. It catalyses the reaction ATP + H2O = ADP + phosphate + H(+). Functionally, DEAD-box RNA helicase involved in RNA degradation. Has RNA-dependent ATPase activity and unwinds double-stranded RNA. The chain is ATP-dependent RNA helicase RhlB from Pseudoalteromonas atlantica (strain T6c / ATCC BAA-1087).